The following is a 504-amino-acid chain: Maturase K (504 aa).

Belongs to the intron maturase 2 family. MatK subfamily.

The protein localises to the plastid. It localises to the chloroplast. Its function is as follows. Usually encoded in the trnK tRNA gene intron. Probably assists in splicing its own and other chloroplast group II introns. This is Maturase K from Quercus petraea (Durmast oak).